Here is a 164-residue protein sequence, read N- to C-terminus: Large ribosomal subunit protein uL11 (164 aa).

It belongs to the universal ribosomal protein uL11 family. Part of the ribosomal stalk of the 50S ribosomal subunit. Interacts with L10 and the large rRNA to form the base of the stalk. L10 forms an elongated spine to which L12 dimers bind in a sequential fashion forming a multimeric L10(L12)X complex.

Functionally, forms part of the ribosomal stalk which helps the ribosome interact with GTP-bound translation factors. The chain is Large ribosomal subunit protein uL11 from Pyrococcus horikoshii (strain ATCC 700860 / DSM 12428 / JCM 9974 / NBRC 100139 / OT-3).